Here is a 694-residue protein sequence, read N- to C-terminus: Glycine--tRNA ligase beta subunit (694 aa).

Belongs to the class-II aminoacyl-tRNA synthetase family. As to quaternary structure, tetramer of two alpha and two beta subunits.

Its subcellular location is the cytoplasm. It catalyses the reaction tRNA(Gly) + glycine + ATP = glycyl-tRNA(Gly) + AMP + diphosphate. In Shewanella denitrificans (strain OS217 / ATCC BAA-1090 / DSM 15013), this protein is Glycine--tRNA ligase beta subunit.